Consider the following 437-residue polypeptide: Enolase (437 aa).

Gln-166 contributes to the (2R)-2-phosphoglycerate binding site. Glu-208 serves as the catalytic Proton donor. Residues Asp-245, Glu-295, and Asp-322 each coordinate Mg(2+). (2R)-2-phosphoglycerate contacts are provided by Lys-347, Arg-376, Ser-377, and Lys-398. The active-site Proton acceptor is Lys-347.

This sequence belongs to the enolase family. The cofactor is Mg(2+).

It is found in the cytoplasm. Its subcellular location is the secreted. The protein localises to the cell surface. The enzyme catalyses (2R)-2-phosphoglycerate = phosphoenolpyruvate + H2O. It functions in the pathway carbohydrate degradation; glycolysis; pyruvate from D-glyceraldehyde 3-phosphate: step 4/5. Catalyzes the reversible conversion of 2-phosphoglycerate (2-PG) into phosphoenolpyruvate (PEP). It is essential for the degradation of carbohydrates via glycolysis. This Lachnoclostridium phytofermentans (strain ATCC 700394 / DSM 18823 / ISDg) (Clostridium phytofermentans) protein is Enolase.